The sequence spans 223 residues: Zinc-finger homeodomain protein 12 (223 aa).

Residues 1-20 (MSSLSKPNRQFLSPTTNNQD) show a composition bias toward polar residues. The segment at 1–24 (MSSLSKPNRQFLSPTTNNQDTGRE) is disordered. A ZF-HD dimerization-type; degenerate zinc finger spans residues 37-88 (YNECLKNHAVSLGGHALDGCGEFTPKSTTILTDPPSLRCDACGCHRNFHRRS). Residues 147–204 (KKHKRTKFTAEQKVKMRGFAERAGWKINGWDEKWVREFCSEVGIERKVLKVWIHNNKY) constitute a DNA-binding region (homeobox; atypical).

As to quaternary structure, homo- and heterodimer with other ZFHD proteins. Interacts with ZHD11.

It is found in the nucleus. Putative transcription factor. This Arabidopsis thaliana (Mouse-ear cress) protein is Zinc-finger homeodomain protein 12 (ZHD12).